The primary structure comprises 519 residues: Mannuronan C5-epimerase (519 aa).

The N-terminal stretch at 1–25 (MNLHPHLRHSLLASALLLASGLATA) is a signal peptide. PbH1 repeat units lie at residues 219 to 246 (GTET…SISQ), 281 to 303 (TQDF…DPHD), 305 to 328 (SHRL…IVSR), 330 to 352 (VNDS…VIDR), 354 to 376 (SVNN…TLYE), and 377 to 399 (SGDN…RVRN). His302 serves as the catalytic Proton acceptor.

The protein belongs to the D-mannuronate C5-epimerase family.

Its subcellular location is the periplasm. It carries out the reaction [(1-&gt;4)-beta-D-mannuronosyl](n) = [alginate](n). It participates in glycan biosynthesis; alginate biosynthesis. Catalyzes the epimerization of beta-D-mannuronate to alpha-L-guluronate during the synthesis of the linear polysaccharide alginate. In addition, is part of a periplasmic protein complex that protects alginate from degradation by AlgL by channeling the newly formed alginate polymer through a scaffold that transfers the alginate polymer through the periplasmic space to the outer membrane secretin AlgE. In Pseudomonas putida (strain ATCC 47054 / DSM 6125 / CFBP 8728 / NCIMB 11950 / KT2440), this protein is Mannuronan C5-epimerase (algG).